An 89-amino-acid polypeptide reads, in one-letter code: Small ribosomal subunit protein uS17 (89 aa).

It belongs to the universal ribosomal protein uS17 family. Part of the 30S ribosomal subunit.

In terms of biological role, one of the primary rRNA binding proteins, it binds specifically to the 5'-end of 16S ribosomal RNA. The protein is Small ribosomal subunit protein uS17 of Lactiplantibacillus plantarum (strain ATCC BAA-793 / NCIMB 8826 / WCFS1) (Lactobacillus plantarum).